The following is a 57-amino-acid chain: UPF0057 membrane protein T23F2.5 (57 aa).

The next 2 membrane-spanning stretches (helical) occupy residues 3–23 (LTCTDIPKFLCALLLPPIGVW) and 36–56 (ILLTILGYIPGIIHACYVILA).

It belongs to the UPF0057 (PMP3) family.

The protein localises to the membrane. The chain is UPF0057 membrane protein T23F2.5 from Caenorhabditis elegans.